A 363-amino-acid chain; its full sequence is Peptide chain release factor 2 (363 aa).

Position 251 is an N5-methylglutamine (Gln-251).

Belongs to the prokaryotic/mitochondrial release factor family. Methylated by PrmC. Methylation increases the termination efficiency of RF2.

The protein resides in the cytoplasm. In terms of biological role, peptide chain release factor 2 directs the termination of translation in response to the peptide chain termination codons UGA and UAA. The polypeptide is Peptide chain release factor 2 (Helicobacter pylori (strain G27)).